Here is a 404-residue protein sequence, read N- to C-terminus: Pre-heme d1 synthase (404 aa).

Residues 22–235 (GTPKPVVIWN…LIARALESAE (214 aa)) enclose the Radical SAM core domain. [4Fe-4S] cluster-binding residues include C36, C40, C43, C340, C343, C349, and C371.

Belongs to the radical SAM superfamily. Requires [4Fe-4S] cluster as cofactor.

Its pathway is porphyrin-containing compound metabolism. Functionally, involved in heme d1 biosynthesis. Radical SAM enzyme that catalyzes the removal of two propionate side chains from the intermediate 12,18-didecarboxysiroheme (DDSH) and may introduce the keto functions on rings A and B, yielding the heme d1 precursor dihydro-heme d1. The sequence is that of Pre-heme d1 synthase from Dinoroseobacter shibae (strain DSM 16493 / NCIMB 14021 / DFL 12).